The sequence spans 233 residues: Ciliary microtubule inner protein 6 (233 aa).

Basic and acidic residues-rich tracts occupy residues 1–14 (MEGE…KTED) and 21–33 (AERK…EKSP). Residues 1–45 (MEGEEKQQQHKTEDDGIACVAERKVEIKNEKSPGKSTQHPKPCVD) are disordered. Residues 127-159 (GIVPLTSLDVSGEHENNFVEYISFIHQYDARRT) are mn. Positions 192–233 (LLNTLESGSSEQPQKTDKGNSSGDKVTSPGLCQQNSQELLET) are disordered. The segment covering 195–233 (TLESGSSEQPQKTDKGNSSGDKVTSPGLCQQNSQELLET) has biased composition (polar residues).

It is found in the cell projection. The protein localises to the cilium. This Mus musculus (Mouse) protein is Ciliary microtubule inner protein 6 (Cimip6).